We begin with the raw amino-acid sequence, 276 residues long: Halorhodopsin (276 aa).

Residues 1 to 21 (MTAVSTTATTVLQATQSDVLQ) constitute a propeptide that is removed on maturation. At 22–25 (EIQS) the chain is on the extracellular side. Residues 26–51 (NFLLNSSIWVNIALAGVVILLFVAMG) form a helical membrane-spanning segment. Residues 52-57 (RDLESP) are Cytoplasmic-facing. A helical membrane pass occupies residues 58–81 (RAKLIWVATMLVPLVSISSYAGLA). Residues 82-105 (SGLTVGFLQMPPGHALAGQEVLSP) are Extracellular-facing. Residues 106-127 (WGRYLTWTFSTPMILLALGLLA) form a helical membrane-spanning segment. Residues 128-130 (DTD) are Cytoplasmic-facing. The helical transmembrane segment at 131–154 (IASLFTAITMDIGMCVTGLAAALI) threads the bilayer. Over 155-157 (TSS) the chain is Extracellular. A helical membrane pass occupies residues 158-180 (HLLRWVFYGISCAFFVAVLYVLL). Topologically, residues 181–192 (VQWPADAEAAGT) are cytoplasmic. Residues 193 to 216 (SEIFGTLKILTVVLWLGYPILWAL) traverse the membrane as a helical segment. Residues 217 to 225 (GSEGVALLS) are Extracellular-facing. A helical transmembrane segment spans residues 226-254 (VGVTSWGYSGLDILAKYVFAFLLLRWVAA). An N6-(retinylidene)lysine modification is found at lysine 241. At 255 to 276 (NEGTVSGSGMGIGSGGAAPADD) the chain is on the cytoplasmic side.

This sequence belongs to the archaeal/bacterial/fungal opsin family.

Its subcellular location is the cell membrane. In terms of biological role, light-driven anion pump. The protein is Halorhodopsin of Halobacterium halobium (strain shark).